A 467-amino-acid chain; its full sequence is Glutamate--tRNA ligase 1 (467 aa).

The 'HIGH' region signature appears at 8–18; sequence PSPTGHLHVGG. The 'KMSKS' region motif lies at 230 to 234; sequence PLSKR. ATP is bound at residue K233.

It belongs to the class-I aminoacyl-tRNA synthetase family. Glutamate--tRNA ligase type 1 subfamily. As to quaternary structure, monomer.

The protein localises to the cytoplasm. The enzyme catalyses tRNA(Glu) + L-glutamate + ATP = L-glutamyl-tRNA(Glu) + AMP + diphosphate. Its function is as follows. Catalyzes the attachment of glutamate to tRNA(Glu) in a two-step reaction: glutamate is first activated by ATP to form Glu-AMP and then transferred to the acceptor end of tRNA(Glu). This Petrotoga mobilis (strain DSM 10674 / SJ95) protein is Glutamate--tRNA ligase 1.